Reading from the N-terminus, the 265-residue chain is Reduced viability upon starvation protein 161 (265 aa).

Residues 15–239 form the BAR domain; sequence HSVIIKNVDK…LDQQSRDDYA (225 aa). The stretch at 126 to 193 forms a coiled coil; that stretch reads YFKEIEEAIK…NQLKTELPQL (68 aa).

It is found in the cytoplasm. The protein localises to the cytoskeleton. Component of a cytoskeletal structure that is required for the formation of endocytic vesicles at the plasma membrane level. This chain is Reduced viability upon starvation protein 161 (RVS161), found in Saccharomyces cerevisiae (strain ATCC 204508 / S288c) (Baker's yeast).